The following is a 164-amino-acid chain: Putative HTH-type transcriptional regulator ORF2 (164 aa).

The HTH rrf2-type domain maps to 2–131 (RLTTKGRYAV…SGISLADLVA (130 aa)).

This is Putative HTH-type transcriptional regulator ORF2 from Azotobacter vinelandii.